Reading from the N-terminus, the 209-residue chain is MTPLAVIPFRPLNPKSRLSGIMTREERELFAAAMLTDVIGAVTAAGCTPLVLATTPYTVASVRVRVTDADLSTALNTLLRDQDGPVLIMMADIPLATKEAITAVISADADVAIVPGRGGGTNAIYLQQGSSFATDYYGQSFMKHCRIAEERNLSLEVIDSFRLYVDIDEEEDLVDLLIHGTGESAALLRSFGFQPISMKGRVSVIRSSP.

The protein belongs to the CofC family. Homodimer.

It carries out the reaction (2S)-2-phospholactate + GTP + H(+) = (2S)-lactyl-2-diphospho-5'-guanosine + diphosphate. It functions in the pathway cofactor biosynthesis; coenzyme F420 biosynthesis. Guanylyltransferase that catalyzes the activation of (2S)-2-phospholactate (2-PL) as (2S)-lactyl-2-diphospho-5'-guanosine, via the condensation of 2-PL with GTP. It is involved in the biosynthesis of coenzyme F420, a hydride carrier cofactor. The sequence is that of 2-phospho-L-lactate guanylyltransferase from Methanosphaerula palustris (strain ATCC BAA-1556 / DSM 19958 / E1-9c).